The chain runs to 249 residues: Isoprenyl transferase (249 aa).

Residue Asp-29 is part of the active site. Asp-29 serves as a coordination point for Mg(2+). Substrate-binding positions include 30–33 (GNGR), Trp-34, Arg-42, His-46, and 74–76 (STE). The active-site Proton acceptor is Asn-77. Substrate contacts are provided by residues Trp-78, Arg-80, Arg-197, and 203 to 205 (RLS). Glu-216 contacts Mg(2+).

This sequence belongs to the UPP synthase family. Homodimer. Requires Mg(2+) as cofactor.

In terms of biological role, catalyzes the condensation of isopentenyl diphosphate (IPP) with allylic pyrophosphates generating different type of terpenoids. The sequence is that of Isoprenyl transferase from Trichormus variabilis (strain ATCC 29413 / PCC 7937) (Anabaena variabilis).